The sequence spans 182 residues: Large ribosomal subunit protein uL5 (182 aa).

It belongs to the universal ribosomal protein uL5 family. Part of the 50S ribosomal subunit; part of the 5S rRNA/L5/L18/L25 subcomplex. Contacts the 5S rRNA and the P site tRNA. Forms a bridge to the 30S subunit in the 70S ribosome.

Its function is as follows. This is one of the proteins that bind and probably mediate the attachment of the 5S RNA into the large ribosomal subunit, where it forms part of the central protuberance. In the 70S ribosome it contacts protein S13 of the 30S subunit (bridge B1b), connecting the 2 subunits; this bridge is implicated in subunit movement. Contacts the P site tRNA; the 5S rRNA and some of its associated proteins might help stabilize positioning of ribosome-bound tRNAs. In Borrelia hermsii (strain HS1 / DAH), this protein is Large ribosomal subunit protein uL5.